Reading from the N-terminus, the 115-residue chain is NADH-ubiquinone oxidoreductase chain 3 (115 aa).

3 consecutive transmembrane segments (helical) span residues 3-23 (FMLT…IAFW), 55-75 (FFLV…LLPL), and 84-104 (LEVM…SLAY).

It belongs to the complex I subunit 3 family. As to quaternary structure, core subunit of respiratory chain NADH dehydrogenase (Complex I) which is composed of 45 different subunits. Interacts with TMEM186. Interacts with TMEM242.

Its subcellular location is the mitochondrion inner membrane. It carries out the reaction a ubiquinone + NADH + 5 H(+)(in) = a ubiquinol + NAD(+) + 4 H(+)(out). In terms of biological role, core subunit of the mitochondrial membrane respiratory chain NADH dehydrogenase (Complex I) which catalyzes electron transfer from NADH through the respiratory chain, using ubiquinone as an electron acceptor. Essential for the catalytic activity of complex I. The protein is NADH-ubiquinone oxidoreductase chain 3 of Rhinolophus pumilus (Horseshoe bat).